Here is a 252-residue protein sequence, read N- to C-terminus: MASLGINLDHIATVRQARRTVEPDPVHLALLAELGGADGITVHLREDRRHIQDRDVELLRQTVRTRLNLEMAATAEMVAIALTIKPDMVTLVPEKRQEVTTEGGLDVVSQAAALQGQISQLQGAGIPVSLFVDPERAQLQASQRSGARWVELHTGSYAEASWSQQPLELARLIEGTTEARQLGLRVNAGHGLTYQNVEPIAAISGMEELNIGHTVMARAMAVGLQEAVKQMKELVSAPRQEPLFGAGLAAES.

A 3-amino-2-oxopropyl phosphate-binding site is contributed by Asn7. 1-deoxy-D-xylulose 5-phosphate is bound at residue 9–10; the sequence is DH. A 3-amino-2-oxopropyl phosphate-binding site is contributed by Arg18. The Proton acceptor role is filled by His43. Arg45 and His50 together coordinate 1-deoxy-D-xylulose 5-phosphate. Glu70 functions as the Proton acceptor in the catalytic mechanism. Thr100 serves as a coordination point for 1-deoxy-D-xylulose 5-phosphate. His190 functions as the Proton donor in the catalytic mechanism. 3-amino-2-oxopropyl phosphate contacts are provided by residues Gly191 and 212-213; that span reads GH.

Belongs to the PNP synthase family. As to quaternary structure, homooctamer; tetramer of dimers.

It localises to the cytoplasm. It catalyses the reaction 3-amino-2-oxopropyl phosphate + 1-deoxy-D-xylulose 5-phosphate = pyridoxine 5'-phosphate + phosphate + 2 H2O + H(+). It participates in cofactor biosynthesis; pyridoxine 5'-phosphate biosynthesis; pyridoxine 5'-phosphate from D-erythrose 4-phosphate: step 5/5. Catalyzes the complicated ring closure reaction between the two acyclic compounds 1-deoxy-D-xylulose-5-phosphate (DXP) and 3-amino-2-oxopropyl phosphate (1-amino-acetone-3-phosphate or AAP) to form pyridoxine 5'-phosphate (PNP) and inorganic phosphate. The polypeptide is Pyridoxine 5'-phosphate synthase (Synechococcus sp. (strain RCC307)).